A 189-amino-acid chain; its full sequence is Elongation factor P (189 aa).

Belongs to the elongation factor P family.

Its subcellular location is the cytoplasm. It functions in the pathway protein biosynthesis; polypeptide chain elongation. Its function is as follows. Involved in peptide bond synthesis. Stimulates efficient translation and peptide-bond synthesis on native or reconstituted 70S ribosomes in vitro. Probably functions indirectly by altering the affinity of the ribosome for aminoacyl-tRNA, thus increasing their reactivity as acceptors for peptidyl transferase. This chain is Elongation factor P, found in Campylobacter lari (strain RM2100 / D67 / ATCC BAA-1060).